The primary structure comprises 828 residues: Protein TAPT1 homolog (828 aa).

Low complexity-rich tracts occupy residues 67–83, 212–233, and 302–321; these read NNNNNNNSNNVSSGNHI, QQTQPQPQPQTQTTQQPSSQQP, and SNNNDNNDNNNNNNSKNNNN. 3 disordered regions span residues 67 to 92, 212 to 236, and 297 to 346; these read NNNNNNNSNNVSSGNHITNSNSNSSG, QQTQPQPQPQTQTTQQPSSQQPFSY, and QTTP…TSSI. 5 consecutive transmembrane segments (helical) span residues 428–448, 472–492, 562–582, 722–742, and 754–774; these read ISFGFLVCFDSFLFLFTFLPI, QIFDLFRGFIWVTCFVFLNFI, ILGPFTHLLVATGYVCLHSLV, SSWGVNNIIGFVPFPLASIVV, and IFGIFLMVQIYICLVLLKIFI. A compositionally biased stretch (low complexity) spans 797-822; sequence LSSSSSSSSSNSLNTTSTTSTSTSTT. The interval 797-828 is disordered; sequence LSSSSSSSSSNSLNTTSTTSTSTSTTNDKKNN.

This sequence belongs to the TAPT1 family.

Its subcellular location is the membrane. The chain is Protein TAPT1 homolog from Dictyostelium discoideum (Social amoeba).